The chain runs to 250 residues: Pimeloyl-[acyl-carrier protein] methyl ester esterase (250 aa).

Substrate-binding positions include Trp-12, Ser-71–Leu-72, and Phe-138–Gln-142. Ser-71 (nucleophile) is an active-site residue. Residues Asp-202 and His-230 contribute to the active site. His-230 serves as a coordination point for substrate.

Belongs to the AB hydrolase superfamily. Carboxylesterase BioH family. As to quaternary structure, monomer.

The protein localises to the cytoplasm. The catalysed reaction is 6-carboxyhexanoyl-[ACP] methyl ester + H2O = 6-carboxyhexanoyl-[ACP] + methanol + H(+). It participates in cofactor biosynthesis; biotin biosynthesis. In terms of biological role, the physiological role of BioH is to remove the methyl group introduced by BioC when the pimeloyl moiety is complete. It allows to synthesize pimeloyl-ACP via the fatty acid synthetic pathway through the hydrolysis of the ester bonds of pimeloyl-ACP esters. The sequence is that of Pimeloyl-[acyl-carrier protein] methyl ester esterase from Aromatoleum aromaticum (strain DSM 19018 / LMG 30748 / EbN1) (Azoarcus sp. (strain EbN1)).